Here is a 415-residue protein sequence, read N- to C-terminus: MLEQMGIAAKAASYKLALLSSGEKNRVLEKIADELEAQMESILSANVQDVEQARANGLSEAMLDRLTLTPARLKAIADDVRQVCNLADPVGQVIDGGLLDSGLRMERRRVPLGVVGVIYEARPNVTVDVASLCLKTGNAVILRGGKETYRTNAATVRVIQKALKACGLPEAAVQAIDNPDRSLVNEMLRMDKYIDMLIPRGGAGLHKLCREQSTIPVITGGIGVCHIFVDSSADIAPALKIIVNAKTQRPSTCNTVETLLVHQDIAERFLPALSKQMAESGVTLHGDETVMQLHGPAKLVPLKPEKLDNEFLSLDLNVVVVENMDGAIAHIREHGTQHSDAILTSDMHNAARFVNEVDSAAVYVNASTRFTDGGQFGLGAEVAVSTQKLHARGPMGLEALTTYKWIGFGDGTIRA.

Belongs to the gamma-glutamyl phosphate reductase family.

The protein resides in the cytoplasm. It carries out the reaction L-glutamate 5-semialdehyde + phosphate + NADP(+) = L-glutamyl 5-phosphate + NADPH + H(+). The protein operates within amino-acid biosynthesis; L-proline biosynthesis; L-glutamate 5-semialdehyde from L-glutamate: step 2/2. In terms of biological role, catalyzes the NADPH-dependent reduction of L-glutamate 5-phosphate into L-glutamate 5-semialdehyde and phosphate. The product spontaneously undergoes cyclization to form 1-pyrroline-5-carboxylate. This Salmonella dublin (strain CT_02021853) protein is Gamma-glutamyl phosphate reductase.